We begin with the raw amino-acid sequence, 167 residues long: uncharacterized protein (167 aa).

Belongs to the A.longa ORF167/ORF288 family.

The protein resides in the plastid. This is an uncharacterized protein from Euglena longa (Euglenophycean alga).